A 484-amino-acid chain; its full sequence is Coronin-1B (484 aa).

A Phosphoserine modification is found at S2. WD repeat units lie at residues 80 to 120 (GHTG…LTSP), 130 to 170 (GHTK…ELYR), 174 to 213 (LHPD…LVAE), 217 to 260 (AHEG…EPMA), and 265 to 305 (DSSN…PYIH). Residues 447-481 (KLEEVMHGLRALRVLVKEQGERISRLEEHLGRMEN) are a coiled coil.

The protein belongs to the WD repeat coronin family. As to quaternary structure, forms homooligomers, but does not form complexes with the other coronins. Interacts with Arp2/3 complex components, including ACTR2, ARPC1B and ARPC2. Binds actin. Post-translationally, phosphorylation on Ser-2 regulates the interaction with the Arp2/3 complex and cell motility in fibroblasts. Phosphorylation does not seem to affect subcellular location.

It is found in the cytoplasm. It localises to the cytoskeleton. The protein resides in the stress fiber. Its function is as follows. Regulates leading edge dynamics and cell motility in fibroblasts. May be involved in cytokinesis and signal transduction. The chain is Coronin-1B (Coro1b) from Rattus norvegicus (Rat).